A 300-amino-acid polypeptide reads, in one-letter code: Cation-efflux pump FieF (300 aa).

Transmembrane regions (helical) follow at residues 12-32 (AAIA…FAWW), 39-59 (ILAA…NLLV), 82-102 (AALA…LTGI), and 114-134 (PGVG…LVSF). Zn(2+) contacts are provided by Asp45 and Asp49. Zn(2+) is bound by residues His153 and Asp157. 2 helical membrane passes run 156-176 (SDVM…YGWH) and 178-198 (ADAL…LRMG).

The protein belongs to the cation diffusion facilitator (CDF) transporter (TC 2.A.4) family. FieF subfamily. Homodimer.

The protein localises to the cell inner membrane. The catalysed reaction is Zn(2+)(in) + H(+)(out) = Zn(2+)(out) + H(+)(in). The enzyme catalyses Cd(2+)(in) + H(+)(out) = Cd(2+)(out) + H(+)(in). It carries out the reaction Fe(2+)(in) + H(+)(out) = Fe(2+)(out) + H(+)(in). Divalent metal cation transporter which exports Zn(2+), Cd(2+) and possibly Fe(2+). May be involved in zinc and iron detoxification by efflux. The polypeptide is Cation-efflux pump FieF (Escherichia coli O7:K1 (strain IAI39 / ExPEC)).